Here is a 485-residue protein sequence, read N- to C-terminus: T-complex protein 1 subunit theta (485 aa).

Belongs to the TCP-1 chaperonin family. Component of the T-complex protein 1 (TCP1) complex.

Its subcellular location is the cytoplasm. Its function is as follows. Molecular chaperone; assists the folding of proteins upon ATP hydrolysis. The chain is T-complex protein 1 subunit theta (CCT8) from Encephalitozoon cuniculi (strain GB-M1) (Microsporidian parasite).